Here is a 295-residue protein sequence, read N- to C-terminus: Protein LplC (295 aa).

6 consecutive transmembrane segments (helical) span residues 21-41 (ILFL…IIAG), 81-101 (VSIF…FTMA), 116-136 (LNLV…YLVV), 142-162 (LDTY…LIII), 199-219 (VIAT…FHAL), and 260-280 (GIKL…YPFL). Positions 79 to 280 (MGVSIFITVV…LPILAVYPFL (202 aa)) constitute an ABC transmembrane type-1 domain.

This sequence belongs to the binding-protein-dependent transport system permease family. CysTW subfamily.

Its subcellular location is the cell membrane. In Bacillus subtilis (strain 168), this protein is Protein LplC (lplC).